Here is a 410-residue protein sequence, read N- to C-terminus: Class E basic helix-loop-helix protein 41 (410 aa).

K31 is covalently cross-linked (Glycyl lysine isopeptide (Lys-Gly) (interchain with G-Cter in SUMO2)). In terms of domain architecture, bHLH spans 44–99; it reads TYKLPHRLIEKKRRDRINECIAQLKDLLPEHLKLTTLGHLEKAVVLELTLKHLKAL. A Glycyl lysine isopeptide (Lys-Gly) (interchain with G-Cter in SUMO2) cross-link involves residue K121. In terms of domain architecture, Orange spans 131–166; that stretch reads FHSGFQTCAKEVLQYLARFESWTPREPRCAQLVSHL. 2 disordered regions span residues 209-251 and 371-410; these read IQRT…SAAP and EVAPPGSLRPQHAHSRTHLPHAVNPESSQEDATQPAKDAP. A Glycyl lysine isopeptide (Lys-Gly) (interchain with G-Cter in SUMO2) cross-link involves residue K240.

Homodimer. Heterodimer with BHLHE40/DEC1. Interacts with CIART. Interacts with BMAL1 and RXRA. Interacts with NR0B2 and HNF1A. As to expression, highly expressed in the caudate putamen, pineal gland, granular cell layer of the cerebellum, olfactory bulb, piriform cortex, hippocampus and hypothalamic nuclei. Moderately expressed in skeletal muscle, heart. Weakly expressed in lung.

Its subcellular location is the nucleus. Its function is as follows. Transcriptional repressor involved in the regulation of the circadian rhythm by negatively regulating the activity of the clock genes and clock-controlled genes. Acts as the negative limb of a novel autoregulatory feedback loop (DEC loop) which differs from the one formed by the PER and CRY transcriptional repressors (PER/CRY loop). Both these loops are interlocked as it represses the expression of PER1 and in turn is repressed by PER1/2 and CRY1/2. Represses the activity of the circadian transcriptional activator: CLOCK-BMAL1 heterodimer by competing for the binding to E-box elements (5'-CACGTG-3') found within the promoters of its target genes. Negatively regulates its own expression and the expression of DBP and BHLHE41/DEC2. Acts as a corepressor of RXR and the RXR-LXR heterodimers and represses the ligand-induced RXRA/B/G, NR1H3/LXRA, NR1H4 and VDR transactivation activity. Inhibits HNF1A-mediated transactivation of CYP1A2, CYP2E1 and CYP3A11. The protein is Class E basic helix-loop-helix protein 41 (Bhlhb3) of Rattus norvegicus (Rat).